The primary structure comprises 576 residues: TOX high mobility group box family member 3 (576 aa).

Disordered regions lie at residues 189-258 (NLGG…PQKP), 422-443 (TMVG…QHQM), and 519-563 (LQHM…QIQS). The segment covering 204 to 215 (ASKSATPSPSSS) has biased composition (low complexity). Residues 223–239 (EANRAIGEKRAAPDSGK) are compositionally biased toward basic and acidic residues. The segment covering 240-250 (KPKTPKKKKKK) has biased composition (basic residues). The segment at residues 255-323 (PQKPVSAYAL…EYLKALAAYR (69 aa)) is a DNA-binding region (HMG box). The span at 428 to 443 (PSTQVSPSVQTQQHQM) shows a compositional bias: low complexity. Positions 528–542 (PSPRQHSPVASQITS) are enriched in polar residues. Residues 549–563 (SPQPASQQHQSQIQS) are compositionally biased toward low complexity.

In terms of assembly, homodimer. Interacts with CREB1; the interaction is not depolarization dependent. Interacts with CREBBP (via C-terminus). Interacts (via HGM box) with CITED1 (via C-terminus); the interaction increases estrogen-response element (ERE)-dependent transcription and protection against cell death. Interacts with CREB1 (phosphorylated form). As to expression, expressed mainly in epithelial cells. Expressed in the central nervous system (CNS), in the ileum and within the brain in the frontal and occipital lobe.

It localises to the nucleus. Transcriptional coactivator of the p300/CBP-mediated transcription complex. Activates transactivation through cAMP response element (CRE) sites. Protects against cell death by inducing antiapoptotic and repressing pro-apoptotic transcripts. Stimulates transcription from the estrogen-responsive or BCL-2 promoters. Required for depolarization-induced transcription activation of the C-FOS promoter in neurons. Associates with chromatin to the estrogen-responsive C3 promoter region. This Homo sapiens (Human) protein is TOX high mobility group box family member 3 (TOX3).